Consider the following 207-residue polypeptide: Small ribosomal subunit protein uS4 (207 aa).

A disordered region spans residues 31 to 55; the sequence is KCKLDSKPGQHGRTSGARTSDYGTQ. A compositionally biased stretch (polar residues) spans 42–53; that stretch reads GRTSGARTSDYG. Residues 97 to 160 enclose the S4 RNA-binding domain; the sequence is SRLDNVVYRM…KKQARIVEAL (64 aa).

This sequence belongs to the universal ribosomal protein uS4 family. In terms of assembly, part of the 30S ribosomal subunit. Contacts protein S5. The interaction surface between S4 and S5 is involved in control of translational fidelity.

Its function is as follows. One of the primary rRNA binding proteins, it binds directly to 16S rRNA where it nucleates assembly of the body of the 30S subunit. In terms of biological role, with S5 and S12 plays an important role in translational accuracy. This is Small ribosomal subunit protein uS4 from Burkholderia lata (strain ATCC 17760 / DSM 23089 / LMG 22485 / NCIMB 9086 / R18194 / 383).